The following is a 750-amino-acid chain: Protein O-mannosyl-transferase 2 (750 aa).

Residues 1-23 (MPPATGGGLAESELRPRRGRCGP) are disordered. Serine 41 is modified (phosphoserine). Residues 54–74 (AVGWWALLALVTLLSFATRFH) form a helical membrane-spanning segment. N-linked (GlcNAc...) asparagine glycosylation is present at asparagine 98. 5 consecutive transmembrane segments (helical) span residues 100–120 (TFFF…AGYL), 146–166 (GFCA…VLDL), 191–211 (QYIL…LSMV), 231–251 (LTGV…FIIL), and 283–303 (VLCL…VHFM). Asparagine 330 carries an N-linked (GlcNAc...) asparagine glycan. MIR domains follow at residues 334 to 390 (PEHL…IKKH), 403 to 459 (VEFV…IEVV), and 464 to 521 (GNRI…VEDH). An N-linked (GlcNAc...) asparagine glycan is attached at asparagine 445. Asparagine 528 and asparagine 583 each carry an N-linked (GlcNAc...) asparagine glycan. Helical transmembrane passes span 596-616 (VVWW…SIIA), 643-663 (VLLG…VLYF), 665-685 (HYFP…DTLL), and 700-720 (GIHV…FYLF).

This sequence belongs to the glycosyltransferase 39 family. Interacts with POMT1. In terms of processing, N-glycosylated. In terms of tissue distribution, highly expressed in testis; detected at low levels in most tissues.

The protein resides in the endoplasmic reticulum membrane. The catalysed reaction is a di-trans,poly-cis-dolichyl beta-D-mannosyl phosphate + L-seryl-[protein] = 3-O-(alpha-D-mannosyl)-L-seryl-[protein] + a di-trans,poly-cis-dolichyl phosphate + H(+). The enzyme catalyses a di-trans,poly-cis-dolichyl beta-D-mannosyl phosphate + L-threonyl-[protein] = 3-O-(alpha-D-mannosyl)-L-threonyl-[protein] + a di-trans,poly-cis-dolichyl phosphate + H(+). The protein operates within protein modification; protein glycosylation. Its activity is regulated as follows. Slightly activated by Mg(2+) and inhibited by both Ca(+) and Mn(2+). EDTA ha no effect on activity in vitro. In terms of biological role, transfers mannosyl residues to the hydroxyl group of serine or threonine residues. Coexpression of both POMT1 and POMT2 is necessary for enzyme activity, expression of either POMT1 or POMT2 alone is insufficient. Essentially dedicated to O-mannosylation of alpha-DAG1 and few other proteins but not of cadherins and protocaherins. In Homo sapiens (Human), this protein is Protein O-mannosyl-transferase 2 (POMT2).